Reading from the N-terminus, the 761-residue chain is Pleckstrin homology domain-containing family M member 3 (761 aa).

Position 132 is a phosphoserine (Ser-132). PH domains lie at Asn-211 to His-308 and Asn-361 to Asn-456. A Phorbol-ester/DAG-type zinc finger spans residues Ser-669 to Cys-722.

As to quaternary structure, interacts with AKT1.

The protein localises to the cytoplasm. It is found in the golgi apparatus. Its subcellular location is the cell membrane. In terms of biological role, involved in skeletal muscle differentiation. May act as a scaffold protein for AKT1 during muscle differentiation. In Homo sapiens (Human), this protein is Pleckstrin homology domain-containing family M member 3.